The sequence spans 358 residues: Probable isocitrate dehydrogenase [NAD] subunit alpha, mitochondrial (358 aa).

Residues arginine 108, arginine 118, arginine 139, and aspartate 226 each contribute to the substrate site. Residues aspartate 226, aspartate 250, and aspartate 254 each contribute to the Mg(2+) site.

The protein belongs to the isocitrate and isopropylmalate dehydrogenases family. Heterooligomer of subunits alpha, beta, and gamma in the apparent ratio of 2:1:1. Mg(2+) serves as cofactor. It depends on Mn(2+) as a cofactor.

It localises to the mitochondrion. It catalyses the reaction D-threo-isocitrate + NAD(+) = 2-oxoglutarate + CO2 + NADH. The chain is Probable isocitrate dehydrogenase [NAD] subunit alpha, mitochondrial (idha-1) from Caenorhabditis elegans.